Consider the following 320-residue polypeptide: Acetyl-coenzyme A carboxylase carboxyl transferase subunit alpha (320 aa).

Positions 41–295 (SIEEKAAQAL…GDAIAGALND (255 aa)) constitute a CoA carboxyltransferase C-terminal domain.

The protein belongs to the AccA family. As to quaternary structure, acetyl-CoA carboxylase is a heterohexamer composed of biotin carboxyl carrier protein (AccB), biotin carboxylase (AccC) and two subunits each of ACCase subunit alpha (AccA) and ACCase subunit beta (AccD).

The protein localises to the cytoplasm. It carries out the reaction N(6)-carboxybiotinyl-L-lysyl-[protein] + acetyl-CoA = N(6)-biotinyl-L-lysyl-[protein] + malonyl-CoA. It functions in the pathway lipid metabolism; malonyl-CoA biosynthesis; malonyl-CoA from acetyl-CoA: step 1/1. Functionally, component of the acetyl coenzyme A carboxylase (ACC) complex. First, biotin carboxylase catalyzes the carboxylation of biotin on its carrier protein (BCCP) and then the CO(2) group is transferred by the carboxyltransferase to acetyl-CoA to form malonyl-CoA. The chain is Acetyl-coenzyme A carboxylase carboxyl transferase subunit alpha from Nitrobacter winogradskyi (strain ATCC 25391 / DSM 10237 / CIP 104748 / NCIMB 11846 / Nb-255).